Consider the following 345-residue polypeptide: MSHEKSFLVSGDSYPPQNIVGPQAPMPPYVQAPYPGAPYPQAPFQPSPYGQPGYPHGPSPYPQGGYPQGPYPQGGYPQGPYPQSPFPPNPYGQPPPFQDPGSPQHGNYQEEGPPSYYDNQDFPAVNWDKNIRQAFIRKVFLVLTLQLSVTLSTVAIFTFVGEVKGFVRENVWTYYVSYAIFFISLIVLSCCGDFRRKHPWNLVALSILTVSLSYMVGMIASFYNTEAVIMAVGITTAVCFTVVIFSMQTRYDFTSCMGVLLVSVVVLFIFAILCIFIRNRILEIVYASLGALLFTCFLAVDTQLLLGNKQLSLSPEEYVFAALNLYTDIINIFLYILTIIGRAKE.

The segment at 1 to 115 (MSHEKSFLVS…GNYQEEGPPS (115 aa)) is disordered. Pro residues-rich tracts occupy residues 24–46 (APMP…PFQP) and 79–98 (GPYP…PPFQ). The next 7 membrane-spanning stretches (helical) occupy residues 139 to 159 (VFLV…IFTF), 171 to 191 (VWTY…LSCC), 202 to 222 (LVAL…IASF), 227 to 247 (AVIM…IFSM), 257 to 277 (MGVL…CIFI), 281 to 301 (ILEI…LAVD), and 320 to 340 (FAAL…LTII).

The protein belongs to the BI1 family. LFG subfamily.

It is found in the membrane. Potential apoptotic regulator. The polypeptide is Protein lifeguard 1 (Grina) (Mus musculus (Mouse)).